The chain runs to 43 residues: Potassium channel toxin gamma-KTx 4.9 (43 aa).

Intrachain disulfides connect cysteine 5–cysteine 23, cysteine 11–cysteine 34, cysteine 20–cysteine 39, and cysteine 24–cysteine 41.

This sequence belongs to the ergtoxin family. Gamma-KTx 4 subfamily. As to expression, expressed by the venom gland.

The protein localises to the secreted. Reversibly blocks Kv11/ERG potassium channels. In Centruroides sculpturatus (Arizona bark scorpion), this protein is Potassium channel toxin gamma-KTx 4.9.